Reading from the N-terminus, the 298-residue chain is Protoheme IX farnesyltransferase (298 aa).

A run of 9 helical transmembrane segments spans residues 16–36 (VVAL…PDMP), 45–65 (ALGF…NQLL), 93–113 (VFAG…VNVI), 114–134 (TAVL…VYLK), 141–161 (IVIG…AVTG), 172–192 (SLLV…LAIF), 218–238 (ILVY…VGMS), 241–261 (FYLG…WRML), and 277–297 (IVYL…LPWV).

Belongs to the UbiA prenyltransferase family. Protoheme IX farnesyltransferase subfamily.

It localises to the cell inner membrane. The enzyme catalyses heme b + (2E,6E)-farnesyl diphosphate + H2O = Fe(II)-heme o + diphosphate. The protein operates within porphyrin-containing compound metabolism; heme O biosynthesis; heme O from protoheme: step 1/1. Converts heme B (protoheme IX) to heme O by substitution of the vinyl group on carbon 2 of heme B porphyrin ring with a hydroxyethyl farnesyl side group. The sequence is that of Protoheme IX farnesyltransferase from Xanthomonas axonopodis pv. citri (strain 306).